A 266-amino-acid polypeptide reads, in one-letter code: Expansin-A13 (266 aa).

A signal peptide spans 1–19 (MQRFLLPLLFLALSPPAIC). An Expansin-like EG45 domain is found at 58–171 (GGACGYGDLV…RRINCRKEGS (114 aa)). In terms of domain architecture, Expansin-like CBD spans 181–260 (IFISVLITNV…NWNYGQTFEG (80 aa)).

The protein belongs to the expansin family. Expansin A subfamily.

The protein resides in the secreted. It localises to the cell wall. The protein localises to the membrane. Causes loosening and extension of plant cell walls by disrupting non-covalent bonding between cellulose microfibrils and matrix glucans. No enzymatic activity has been found. This chain is Expansin-A13 (EXPA13), found in Arabidopsis thaliana (Mouse-ear cress).